Reading from the N-terminus, the 227-residue chain is PKHD-type hydroxylase Bpro_3048 (227 aa).

Positions 78-179 (KIFTPRINRY…RLACFFWVES (102 aa)) constitute a Fe2OG dioxygenase domain. His97, Asp99, and His160 together coordinate Fe cation. Arg170 serves as a coordination point for 2-oxoglutarate.

The cofactor is Fe(2+). L-ascorbate is required as a cofactor.

This is PKHD-type hydroxylase Bpro_3048 from Polaromonas sp. (strain JS666 / ATCC BAA-500).